Here is a 503-residue protein sequence, read N- to C-terminus: Long-chain-aldehyde dehydrogenase (503 aa).

218–224 (GYGAEVG) lines the NAD(+) pocket. Catalysis depends on residues glutamate 262 and cysteine 301.

It belongs to the aldehyde dehydrogenase family. As to quaternary structure, homotetramer.

It catalyses the reaction a long-chain fatty aldehyde + NAD(+) + H2O = a long-chain fatty acid + NADH + 2 H(+). Completely inhibited by p-chloromercuribenzoate and N-ethylmaleimide. Strongly inhibited by iodoacetate. Inhibited by Pb(2+), Fe(3+), Ag(+) and Hg(2+) and partially inhibited by several other metal ions Mn(2+), Zn(2+) and Cu(2+). Aldehyde dehydrogenase that shows activity toward n-alkanals (C(4) to C(14)), with a preference for longer carbon chains. The best substrate is tetradecanal. In Acinetobacter sp, this protein is Long-chain-aldehyde dehydrogenase (ald1).